The following is a 110-amino-acid chain: Large ribosomal subunit protein P2C (110 aa).

Residues 83–110 form a disordered region; that stretch reads APAAEEAAKEEAKEEEESDEDMGFGLFD. Over residues 95–104 the composition is skewed to acidic residues; sequence KEEEESDEDM. The residue at position 100 (S100) is a Phosphoserine.

It belongs to the eukaryotic ribosomal protein P1/P2 family. Component of the large ribosomal subunit (LSU). Mature yeast ribosomes consist of a small (40S) and a large (60S) subunit. The 40S small subunit contains 1 molecule of ribosomal RNA (18S rRNA) and at least 33 different proteins. The large 60S subunit contains 3 rRNA molecules (25S, 5.8S and 5S rRNA) and at least 46 different proteins. The acidic ribosomal P-proteins form the stalk structure of the 60S subunit. They are organized as a pentameric complex in which uL10/P0 interacts with 2 heterodimers of P1 and P2 proteins.

It is found in the cytoplasm. Its function is as follows. Component of the ribosome, a large ribonucleoprotein complex responsible for the synthesis of proteins in the cell. The small ribosomal subunit (SSU) binds messenger RNAs (mRNAs) and translates the encoded message by selecting cognate aminoacyl-transfer RNA (tRNA) molecules. The large subunit (LSU) contains the ribosomal catalytic site termed the peptidyl transferase center (PTC), which catalyzes the formation of peptide bonds, thereby polymerizing the amino acids delivered by tRNAs into a polypeptide chain. The nascent polypeptides leave the ribosome through a tunnel in the LSU and interact with protein factors that function in enzymatic processing, targeting, and the membrane insertion of nascent chains at the exit of the ribosomal tunnel. The sequence is that of Large ribosomal subunit protein P2C (rpp203) from Schizosaccharomyces pombe (strain 972 / ATCC 24843) (Fission yeast).